The following is a 134-amino-acid chain: Small ribosomal subunit protein uS8c (134 aa).

This sequence belongs to the universal ribosomal protein uS8 family. In terms of assembly, part of the 30S ribosomal subunit.

It is found in the plastid. Its subcellular location is the chloroplast. Functionally, one of the primary rRNA binding proteins, it binds directly to 16S rRNA central domain where it helps coordinate assembly of the platform of the 30S subunit. This Aethionema grandiflorum (Persian stone-cress) protein is Small ribosomal subunit protein uS8c (rps8).